The chain runs to 123 residues: Ribosome-binding factor A (123 aa).

Belongs to the RbfA family. Monomer. Binds 30S ribosomal subunits, but not 50S ribosomal subunits or 70S ribosomes.

It localises to the cytoplasm. Its function is as follows. One of several proteins that assist in the late maturation steps of the functional core of the 30S ribosomal subunit. Associates with free 30S ribosomal subunits (but not with 30S subunits that are part of 70S ribosomes or polysomes). Required for efficient processing of 16S rRNA. May interact with the 5'-terminal helix region of 16S rRNA. The sequence is that of Ribosome-binding factor A from Legionella pneumophila (strain Lens).